We begin with the raw amino-acid sequence, 312 residues long: Mycothiol acetyltransferase (312 aa).

N-acetyltransferase domains follow at residues 8 to 136 and 149 to 301; these read PIIR…LPMP and LRLD…HQDH. Glutamate 38 serves as a coordination point for 1D-myo-inositol 2-(L-cysteinylamino)-2-deoxy-alpha-D-glucopyranoside. Acetyl-CoA-binding positions include 77–79 and 85–90; these read LMV and RQGIAT. Positions 175, 215, and 226 each coordinate 1D-myo-inositol 2-(L-cysteinylamino)-2-deoxy-alpha-D-glucopyranoside. Residues 230 to 232 and 237 to 243 contribute to the acetyl-CoA site; these read LGV and EGKGVGR. Tyrosine 264 lines the 1D-myo-inositol 2-(L-cysteinylamino)-2-deoxy-alpha-D-glucopyranoside pocket. 269–274 provides a ligand contact to acetyl-CoA; it reads NERVVH. Positions 292 to 312 are disordered; sequence PAKPARHQDHGRQSSPQERDA. The segment covering 297-312 has biased composition (basic and acidic residues); that stretch reads RHQDHGRQSSPQERDA.

This sequence belongs to the acetyltransferase family. MshD subfamily. In terms of assembly, monomer.

The catalysed reaction is 1D-myo-inositol 2-(L-cysteinylamino)-2-deoxy-alpha-D-glucopyranoside + acetyl-CoA = mycothiol + CoA + H(+). In terms of biological role, catalyzes the transfer of acetyl from acetyl-CoA to desacetylmycothiol (Cys-GlcN-Ins) to form mycothiol. This chain is Mycothiol acetyltransferase, found in Propionibacterium freudenreichii subsp. shermanii (strain ATCC 9614 / DSM 4902 / CIP 103027 / NCIMB 8099 / CIRM-BIA1).